A 285-amino-acid chain; its full sequence is Putative pyruvate, phosphate dikinase regulatory protein (285 aa).

Gly165–Thr172 is a binding site for ADP.

This sequence belongs to the pyruvate, phosphate/water dikinase regulatory protein family. PDRP subfamily.

It catalyses the reaction N(tele)-phospho-L-histidyl/L-threonyl-[pyruvate, phosphate dikinase] + ADP = N(tele)-phospho-L-histidyl/O-phospho-L-threonyl-[pyruvate, phosphate dikinase] + AMP + H(+). The enzyme catalyses N(tele)-phospho-L-histidyl/O-phospho-L-threonyl-[pyruvate, phosphate dikinase] + phosphate + H(+) = N(tele)-phospho-L-histidyl/L-threonyl-[pyruvate, phosphate dikinase] + diphosphate. Bifunctional serine/threonine kinase and phosphorylase involved in the regulation of the pyruvate, phosphate dikinase (PPDK) by catalyzing its phosphorylation/dephosphorylation. This Lactobacillus delbrueckii subsp. bulgaricus (strain ATCC BAA-365 / Lb-18) protein is Putative pyruvate, phosphate dikinase regulatory protein.